The sequence spans 227 residues: Large ribosomal subunit protein uL3 (227 aa).

This sequence belongs to the universal ribosomal protein uL3 family. Part of the 50S ribosomal subunit. Forms a cluster with proteins L14 and L19.

One of the primary rRNA binding proteins, it binds directly near the 3'-end of the 23S rRNA, where it nucleates assembly of the 50S subunit. The protein is Large ribosomal subunit protein uL3 of Persephonella marina (strain DSM 14350 / EX-H1).